A 244-amino-acid polypeptide reads, in one-letter code: tRNA (guanine-N(7)-)-methyltransferase (244 aa).

Pro residues predominate over residues 1 to 11; that stretch reads MTDTHVPPPEL. Residues 1-23 form a disordered region; it reads MTDTHVPPPELPAAEEGEERPHR. Residues Glu74, Glu99, Asp126, and Asp149 each coordinate S-adenosyl-L-methionine. Asp149 is a catalytic residue. Substrate-binding positions include Lys153, Asp185, and 222–225; that span reads TKFE.

Belongs to the class I-like SAM-binding methyltransferase superfamily. TrmB family.

The catalysed reaction is guanosine(46) in tRNA + S-adenosyl-L-methionine = N(7)-methylguanosine(46) in tRNA + S-adenosyl-L-homocysteine. The protein operates within tRNA modification; N(7)-methylguanine-tRNA biosynthesis. In terms of biological role, catalyzes the formation of N(7)-methylguanine at position 46 (m7G46) in tRNA. This is tRNA (guanine-N(7)-)-methyltransferase from Pseudomonas syringae pv. tomato (strain ATCC BAA-871 / DC3000).